We begin with the raw amino-acid sequence, 635 residues long: Threonine--tRNA ligase (635 aa).

One can recognise a TGS domain in the interval 1–61 (MVSIRLPDGS…DRDASLAIVT (61 aa)). The interval 242–533 (DHRKLGKQLD…LIEHHAGAMP (292 aa)) is catalytic. Zn(2+)-binding residues include Cys-333, His-384, and His-510.

This sequence belongs to the class-II aminoacyl-tRNA synthetase family. As to quaternary structure, homodimer. It depends on Zn(2+) as a cofactor.

The protein localises to the cytoplasm. It catalyses the reaction tRNA(Thr) + L-threonine + ATP = L-threonyl-tRNA(Thr) + AMP + diphosphate + H(+). Functionally, catalyzes the attachment of threonine to tRNA(Thr) in a two-step reaction: L-threonine is first activated by ATP to form Thr-AMP and then transferred to the acceptor end of tRNA(Thr). Also edits incorrectly charged L-seryl-tRNA(Thr). This chain is Threonine--tRNA ligase, found in Burkholderia lata (strain ATCC 17760 / DSM 23089 / LMG 22485 / NCIMB 9086 / R18194 / 383).